A 1082-amino-acid polypeptide reads, in one-letter code: TNF receptor-associated factor homolog 1b (1082 aa).

The interval 1–54 is disordered; sequence MAEAVDEDSGVGRSLEESSNGQHSQAGEALSEWRSSGQVENGTPSTSPSYWDID. A2 is modified (N-acetylalanine). Positions 33 to 49 are enriched in polar residues; it reads WRSSGQVENGTPSTSPS. The region spanning 67–198 is the MATH domain; sequence YGQYTWKIPK…SGCLTIEAKV (132 aa). 6 disordered regions span residues 358–388, 440–666, 697–762, 780–800, 812–841, and 858–889; these read LPPK…ERDE, TEQR…SNVG, SIVN…QVVL, LSAP…APII, SSVQ…NQQT, and SSSS…PTSS. 2 stretches are compositionally biased toward basic and acidic residues: residues 359–388 and 440–453; these read PPKD…ERDE and TEQR…EREK. Residues 446 to 507 are a coiled coil; the sequence is RGAAEREKKS…EEEKDSVTEK (62 aa). The segment covering 454–471 has biased composition (basic residues); the sequence is KSKKKQAKQKRNKNKGKD. The span at 472–488 shows a compositional bias: basic and acidic residues; the sequence is KRKEEKVSFATHAKDLE. Low complexity-rich tracts occupy residues 519–534 and 560–573; these read GDVS…SADI and SSEG…ISIS. Polar residues-rich tracts occupy residues 588–630 and 645–666; these read DDSS…QQVK and QPST…SNVG. 2 stretches are compositionally biased toward low complexity: residues 858 to 871 and 878 to 889; these read SSSS…SSHG and PSSSYSQAPTSS.

As to quaternary structure, forms homooligomers. Interacts with SNC1, RPS2 and CPR1/CPR30. Interacts with ATG6.

The protein localises to the cytoplasm. Its subcellular location is the cell membrane. Its function is as follows. Functions redundantly with TRAF1A in the regulation of plant immune response. Contributes to the turnover of the nucleotide-binding domain and leucine-rich repeat-containing (NB-LRR) immune receptors SNC1 and RPS2. May associate with an E3 ubiquitin-protein ligase complex, which modulates ubiquitination and subsequent degradation of NB-LRR immune sensors to maintain their homeostasis. Functions redundantly with TRAF1A in the regulation of autophagosome formation. Required for SINAT1- and SINAT2-mediated ubiquitination and destabilization of ATG6. Functions as a molecular adapter that helps to regulate autophagy by modulating ATG6 stability. The polypeptide is TNF receptor-associated factor homolog 1b (Arabidopsis thaliana (Mouse-ear cress)).